A 320-amino-acid polypeptide reads, in one-letter code: Cytochrome f (320 aa).

An N-terminal signal peptide occupies residues 1–35; that stretch reads MHTKNLFYSRTQQITQYLSALLMMVILTRTSISSA. Residues tyrosine 36, cysteine 56, cysteine 59, and histidine 60 each contribute to the heme site. Residues 286–306 form a helical membrane-spanning segment; the sequence is VQVLLFFFASIILAQIFLVLK.

Belongs to the cytochrome f family. In terms of assembly, the 4 large subunits of the cytochrome b6-f complex are cytochrome b6, subunit IV (17 kDa polypeptide, petD), cytochrome f and the Rieske protein, while the 4 small subunits are PetG, PetL, PetM and PetN. The complex functions as a dimer. The cofactor is heme.

It localises to the plastid thylakoid membrane. Functionally, component of the cytochrome b6-f complex, which mediates electron transfer between photosystem II (PSII) and photosystem I (PSI), cyclic electron flow around PSI, and state transitions. In Cuscuta gronovii (Common dodder), this protein is Cytochrome f.